Consider the following 880-residue polypeptide: Alanine--tRNA ligase (880 aa).

Positions 414–443 (TVDESEFESEMEKQRNRARKARSGGDTEGW) are disordered. 4 residues coordinate Zn(2+): histidine 566, histidine 570, cysteine 668, and histidine 672.

Belongs to the class-II aminoacyl-tRNA synthetase family. Zn(2+) is required as a cofactor.

The protein resides in the cytoplasm. The enzyme catalyses tRNA(Ala) + L-alanine + ATP = L-alanyl-tRNA(Ala) + AMP + diphosphate. Its function is as follows. Catalyzes the attachment of alanine to tRNA(Ala) in a two-step reaction: alanine is first activated by ATP to form Ala-AMP and then transferred to the acceptor end of tRNA(Ala). Also edits incorrectly charged Ser-tRNA(Ala) and Gly-tRNA(Ala) via its editing domain. This chain is Alanine--tRNA ligase, found in Alkaliphilus metalliredigens (strain QYMF).